The chain runs to 318 residues: DNA repair nuclease/redox regulator APEX1 (318 aa).

Positions 1–33 (MPKRGKKGAVAEDGDELKTEPEAKKSKTTAKKN) are necessary for interaction with YBX1, binding to RNA, association together with NPM1 to rRNA, endoribonuclease activity on abasic RNA and localization in the nucleoli. The disordered stretch occupies residues 1–60 (MPKRGKKGAVAEDGDELKTEPEAKKSKTTAKKNDKEAAGEGPALYEDPPDQKTSPSGKPA). N6-acetyllysine; by EP300 is present on residues lysine 6 and lysine 7. A Nuclear localization signal (NLS) motif is present at residues 8-13 (GAVAED). The segment covering 16 to 38 (ELKTEPEAKKSKTTAKKNDKEAA) has biased composition (basic and acidic residues). The tract at residues 23–33 (AKKSKTTAKKN) is necessary for interaction with NPM1 and for efficient rRNA binding. Lysine 27, lysine 31, lysine 32, and lysine 35 each carry N6-acetyllysine. Position 54 is a phosphoserine (serine 54). The Nuclear export signal (NES) motif lies at 64-80 (ICSWNVDGLRAWIKKKG). Cysteine 65 carries the S-nitrosocysteine; alternate modification. A disulfide bridge connects residues cysteine 65 and cysteine 93. Aspartate 70 provides a ligand contact to Mg(2+). Cysteine 93 bears the S-nitrosocysteine; alternate mark. Glutamate 96 lines the Mg(2+) pocket. Tyrosine 171 is an active-site residue. Position 197 is an N6-acetyllysine (lysine 197). Aspartate 210 and asparagine 212 together coordinate Mg(2+). Aspartate 210 serves as the catalytic Proton donor/acceptor. Residue threonine 233 is modified to Phosphothreonine; by CDK5. The interval 289 to 318 (HSLLTALCDSKIRSKALGSDHCPITLYLAL) is mitochondrial targeting sequence (MTS). Aspartate 308 is a Mg(2+) binding site. Position 310 is an S-nitrosocysteine (cysteine 310).

The protein belongs to the DNA repair enzymes AP/ExoA family. In terms of assembly, monomer. Homodimer; disulfide-linked. Component of the SET complex, composed of at least APEX1, SET, ANP32A, HMGB2, NME1 and TREX1. Associates with the dimer XRCC5/XRCC6 in a DNA-dependent manner. Interacts with SIRT1; the interaction is increased in the context of genotoxic stress. Interacts with HDAC1, HDAC2 and HDAC3; the interactions are not dependent on the APEX1 acetylation status. Interacts with XRCC1; the interaction is induced by SIRT1 and increased with the APEX1 acetylated form. Interacts with NPM1 (via N-terminal domain); the interaction is RNA-dependent and decreases in hydrogen peroxide-damaged cells. Interacts (via N-terminus) with YBX1 (via C-terminus); the interaction is increased in presence of APEX1 acetylated at Lys-6 and Lys-7. Interacts with HNRNPL; the interaction is DNA-dependent. Interacts (via N-terminus) with KPNA1 and KPNA2. Interacts with TXN; the interaction stimulates the FOS/JUN AP-1 complex DNA-binding activity in a redox-dependent manner. Interacts with GZMA, KRT8, MDM2, POLB, PRDX6, PRPF19, RPLP0, TOMM20 and WDR77. Binds to CDK5. It depends on Mg(2+) as a cofactor. The cofactor is Mn(2+). In terms of processing, phosphorylated. Phosphorylation by kinase PKC or casein kinase CK2 results in enhanced redox activity that stimulates binding of the FOS/JUN AP-1 complex to its cognate binding site. AP-endodeoxyribonuclease activity is not affected by CK2-mediated phosphorylation. Phosphorylation of Thr-233 by CDK5 in response to MPP(+)/MPTP (1-methyl-4-phenylpyridinium) reduces AP-endodeoxyribonuclease activity resulting in accumulation of DNA damage and contributing to neuronal death. Acetylated on Lys-6 and Lys-7. Acetylation is increased by the transcriptional coactivator EP300 acetyltransferase, genotoxic agents like H(2)O(2) and methyl methanesulfonate (MMS). Acetylation increases its binding affinity to the negative calcium response element (nCaRE) DNA promoter. The acetylated form induces a stronger binding of YBX1 to the Y-box sequence in the MDR1 promoter than the unacetylated form. Deacetylated on lysines. Lys-6 and Lys-7 are deacetylated by SIRT1. Post-translationally, cleaved at Lys-31 by granzyme A to create the mitochondrial form; leading in reduction of binding to DNA, AP endodeoxyribonuclease activity, redox activation of transcription factors and to enhanced cell death. Cleaved by granzyme K; leading to intracellular ROS accumulation and enhanced cell death after oxidative stress. In terms of processing, cys-69 and Cys-93 are nitrosylated in response to nitric oxide (NO) and lead to the exposure of the nuclear export signal (NES). Ubiquitinated by MDM2; leading to translocation to the cytoplasm and proteasomal degradation.

It localises to the nucleus. Its subcellular location is the nucleolus. The protein localises to the nucleus speckle. The protein resides in the endoplasmic reticulum. It is found in the cytoplasm. It localises to the mitochondrion. It catalyses the reaction a deoxyribonucleotide-2'-deoxyribose-5'-monophosphate-DNA + H2O = a 5'-end 2'-deoxyribose-5'-monophosphate-DNA + a 3'-end 2'-deoxyribonucleotide-DNA + H(+). The catalysed reaction is Exonucleolytic cleavage in the 3'- to 5'-direction to yield nucleoside 5'-phosphates.. It carries out the reaction a 3'-end 2'-deoxyribonucleotide-3'-phosphoglycolate-DNA + H2O = 2-phosphoglycolate + a 3'-end 2'-deoxyribonucleotide-DNA + H(+). The enzyme catalyses a 3'-end 2'-deoxyribonucleotide-8-oxoguanine-DNA + H2O = 8-oxo-dGMP + a 3'-end 2'-deoxyribonucleotide-DNA + H(+). With respect to regulation, NPM1 stimulates endodeoxyribonuclease activity on double-stranded DNA with AP sites, but inhibits endoribonuclease activity on single-stranded RNA containing AP sites. Its function is as follows. Multifunctional protein that plays a central role in the cellular response to oxidative stress. The two major activities of APEX1 are DNA repair and redox regulation of transcriptional factors. Functions as an apurinic/apyrimidinic (AP) endodeoxyribonuclease in the base excision repair (BER) pathway of DNA lesions induced by oxidative and alkylating agents. Initiates repair of AP sites in DNA by catalyzing hydrolytic incision of the phosphodiester backbone immediately adjacent to the damage, generating a single-strand break with 5'-deoxyribose phosphate and 3'-hydroxyl ends. Also incises at AP sites in the DNA strand of DNA/RNA hybrids, single-stranded DNA regions of R-loop structures, and single-stranded RNA molecules. Operates at switch sites of immunoglobulin (Ig) constant regions where it mediates Ig isotype class switch recombination. Processes AP sites induced by successive action of AICDA and UNG. Generates staggered nicks in opposite DNA strands resulting in the formation of double-strand DNA breaks that are finally resolved via non-homologous end joining repair pathway. Has 3'-5' exodeoxyribonuclease activity on mismatched deoxyribonucleotides at the 3' termini of nicked or gapped DNA molecules during short-patch BER. Possesses DNA 3' phosphodiesterase activity capable of removing lesions (such as phosphoglycolate and 8-oxoguanine) blocking the 3' side of DNA strand breaks. Also acts as an endoribonuclease involved in the control of single-stranded RNA metabolism. Plays a role in regulating MYC mRNA turnover by preferentially cleaving in between UA and CA dinucleotides of the MYC coding region determinant (CRD). In association with NMD1, plays a role in the rRNA quality control process during cell cycle progression. Acts as a loading factor for POLB onto non-incised AP sites in DNA and stimulates the 5'-terminal deoxyribose 5'-phosphate (dRp) excision activity of POLB. Exerts reversible nuclear redox activity to regulate DNA binding affinity and transcriptional activity of transcriptional factors by controlling the redox status of their DNA-binding domain, such as the FOS/JUN AP-1 complex after exposure to IR. Involved in calcium-dependent down-regulation of parathyroid hormone (PTH) expression by binding to negative calcium response elements (nCaREs). Together with HNRNPL or the dimer XRCC5/XRCC6, associates with nCaRE, acting as an activator of transcriptional repression. May also play a role in the epigenetic regulation of gene expression by participating in DNA demethylation. Stimulates the YBX1-mediated MDR1 promoter activity, when acetylated at Lys-6 and Lys-7, leading to drug resistance. Plays a role in protection from granzyme-mediated cellular repair leading to cell death. Binds DNA and RNA. Associates, together with YBX1, on the MDR1 promoter. Together with NPM1, associates with rRNA. This Pongo pygmaeus (Bornean orangutan) protein is DNA repair nuclease/redox regulator APEX1 (APEX1).